A 225-amino-acid chain; its full sequence is NAD(P)H-quinone oxidoreductase subunit K, chloroplastic (225 aa).

Residues cysteine 43, cysteine 44, cysteine 108, and cysteine 139 each contribute to the [4Fe-4S] cluster site.

This sequence belongs to the complex I 20 kDa subunit family. NDH is composed of at least 16 different subunits, 5 of which are encoded in the nucleus. It depends on [4Fe-4S] cluster as a cofactor.

It is found in the plastid. The protein resides in the chloroplast thylakoid membrane. The enzyme catalyses a plastoquinone + NADH + (n+1) H(+)(in) = a plastoquinol + NAD(+) + n H(+)(out). It carries out the reaction a plastoquinone + NADPH + (n+1) H(+)(in) = a plastoquinol + NADP(+) + n H(+)(out). Functionally, NDH shuttles electrons from NAD(P)H:plastoquinone, via FMN and iron-sulfur (Fe-S) centers, to quinones in the photosynthetic chain and possibly in a chloroplast respiratory chain. The immediate electron acceptor for the enzyme in this species is believed to be plastoquinone. Couples the redox reaction to proton translocation, and thus conserves the redox energy in a proton gradient. The sequence is that of NAD(P)H-quinone oxidoreductase subunit K, chloroplastic from Arabis hirsuta (Hairy rock-cress).